A 155-amino-acid chain; its full sequence is Small ribosomal subunit protein uS7 (155 aa).

This sequence belongs to the universal ribosomal protein uS7 family. As to quaternary structure, part of the 30S ribosomal subunit. Contacts proteins S9 and S11.

One of the primary rRNA binding proteins, it binds directly to 16S rRNA where it nucleates assembly of the head domain of the 30S subunit. Is located at the subunit interface close to the decoding center, probably blocks exit of the E-site tRNA. The sequence is that of Small ribosomal subunit protein uS7 from Xylella fastidiosa (strain M12).